Here is a 449-residue protein sequence, read N- to C-terminus: Hyaluronidase-1 (449 aa).

An N-terminal signal peptide occupies residues 1–39 (MKPFSPEVSPDPCPATAAHLLRTYTLFLTLLELAQGCRG). Cystine bridges form between Cys-58-Cys-348 and Cys-222-Cys-236. 2 N-linked (GlcNAc...) asparagine glycosylation sites follow: Asn-85 and Asn-114. The Proton donor role is filled by Glu-146. 3 N-linked (GlcNAc...) asparagine glycosylation sites follow: Asn-231, Asn-252, and Asn-365. 3 disulfide bridges follow: Cys-373/Cys-384, Cys-378/Cys-433, and Cys-435/Cys-444. The region spanning 433 to 444 (CRCYRGWSGEWC) is the EGF-like domain.

It belongs to the glycosyl hydrolase 56 family.

It is found in the secreted. The protein resides in the lysosome. It catalyses the reaction Random hydrolysis of (1-&gt;4)-linkages between N-acetyl-beta-D-glucosamine and D-glucuronate residues in hyaluronate.. Functionally, may have a role in promoting tumor progression. May block the TGFB1-enhanced cell growth. Overexpression of HYAL1 suppressed the growth rate of colon carcinoma cell tumors in an experimental model. The protein is Hyaluronidase-1 (Hyal1) of Rattus norvegicus (Rat).